Reading from the N-terminus, the 323-residue chain is MKVSIIGAGMVGSSIAYATMIKGVAREISIVDINGDLAEGQALDLSHGAPYVHPVRIKGGNDYSLTKNSDVVVITAGRAQKPGETRLQLLKSNAKIISSIVESCLKYSENPIILMVSNPVDVLTWVAWKKSGLPRERIIGSGTTLDTARLRQNIADHCKLDPRSVHAYIIGEHGDSEIASWSTANVGGVPIKEFCNGCLAKGCERDKVFERIFENTRDAAYKIIEKKGATYYGIGLAVARILETIAGDHHSVLTVSSVHEEFRGMRDVPFSVPSVLGKKGIERILPLKLSDDELKGLENSAKVIKAAIESILENREPRAENPR.

Val-11, Asp-32, and Tyr-63 together coordinate NAD(+). Substrate is bound by residues Gln-80 and Arg-86. Residues Ser-99, 116–118, and Ser-141 contribute to the NAD(+) site; that span reads VSN. Position 118-121 (118-121) interacts with substrate; it reads NPVD. 146–149 is a substrate binding site; the sequence is DTAR. Residues Arg-151 and His-166 each contribute to the beta-D-fructose 1,6-bisphosphate site. His-173 acts as the Proton acceptor in catalysis. Tyr-221 carries the phosphotyrosine modification. Residue Thr-230 participates in substrate binding.

Belongs to the LDH/MDH superfamily. LDH family. In terms of assembly, homotetramer.

It is found in the cytoplasm. The catalysed reaction is (S)-lactate + NAD(+) = pyruvate + NADH + H(+). It functions in the pathway fermentation; pyruvate fermentation to lactate; (S)-lactate from pyruvate: step 1/1. With respect to regulation, allosterically activated by fructose 1,6-bisphosphate (FBP). Its function is as follows. Catalyzes the conversion of lactate to pyruvate. The polypeptide is L-lactate dehydrogenase (Kosmotoga olearia (strain ATCC BAA-1733 / DSM 21960 / TBF 19.5.1)).